A 539-amino-acid chain; its full sequence is Probable glycerol kinase (539 aa).

Thr-12 provides a ligand contact to substrate. Position 16 (Arg-16) interacts with ATP. Positions 86, 168, and 285 each coordinate substrate. ATP-binding positions include Thr-307, Gly-352, and 453–457; that span reads GMAKN.

The protein belongs to the FGGY kinase family.

The catalysed reaction is glycerol + ATP = sn-glycerol 3-phosphate + ADP + H(+). The protein operates within polyol metabolism; glycerol degradation via glycerol kinase pathway; sn-glycerol 3-phosphate from glycerol: step 1/1. The polypeptide is Probable glycerol kinase (gk) (Dictyostelium discoideum (Social amoeba)).